The sequence spans 302 residues: Protoheme IX farnesyltransferase 2 (302 aa).

A run of 9 helical transmembrane segments spans residues 14–34 (IIFG…QGSV), 36–56 (WWLL…GCAI), 85–105 (AALA…WFCT), 108–128 (LATG…SLYM), 133–153 (VYGT…GYCA), 163–183 (AILL…IAIF), 209–229 (IVLY…GGYA), 230–250 (GYGY…MALS), and 264–284 (QVFF…AVDG).

The protein belongs to the UbiA prenyltransferase family. Protoheme IX farnesyltransferase subfamily.

It is found in the cell inner membrane. It catalyses the reaction heme b + (2E,6E)-farnesyl diphosphate + H2O = Fe(II)-heme o + diphosphate. Its pathway is porphyrin-containing compound metabolism; heme O biosynthesis; heme O from protoheme: step 1/1. Its function is as follows. Converts heme B (protoheme IX) to heme O by substitution of the vinyl group on carbon 2 of heme B porphyrin ring with a hydroxyethyl farnesyl side group. The sequence is that of Protoheme IX farnesyltransferase 2 from Chromobacterium violaceum (strain ATCC 12472 / DSM 30191 / JCM 1249 / CCUG 213 / NBRC 12614 / NCIMB 9131 / NCTC 9757 / MK).